A 141-amino-acid polypeptide reads, in one-letter code: ATP synthase epsilon chain (141 aa).

This sequence belongs to the ATPase epsilon chain family. F-type ATPases have 2 components, CF(1) - the catalytic core - and CF(0) - the membrane proton channel. CF(1) has five subunits: alpha(3), beta(3), gamma(1), delta(1), epsilon(1). CF(0) has three main subunits: a, b and c.

The protein resides in the cell inner membrane. Its function is as follows. Produces ATP from ADP in the presence of a proton gradient across the membrane. The chain is ATP synthase epsilon chain from Burkholderia ambifaria (strain ATCC BAA-244 / DSM 16087 / CCUG 44356 / LMG 19182 / AMMD) (Burkholderia cepacia (strain AMMD)).